A 401-amino-acid polypeptide reads, in one-letter code: Pectate lyase (401 aa).

Residues 1–20 (MATTILPLILFISSLAIASS) form the signal peptide. Asn38 carries an N-linked (GlcNAc...) asparagine glycan. Asp199, Asp223, and Asp227 together coordinate Ca(2+). Arg279 is an active-site residue.

It belongs to the polysaccharide lyase 1 family. Requires Ca(2+) as cofactor. In terms of tissue distribution, expressed in sites of vascular differentiation and in new primordia on the flank of the shoot meristem.

It catalyses the reaction Eliminative cleavage of (1-&gt;4)-alpha-D-galacturonan to give oligosaccharides with 4-deoxy-alpha-D-galact-4-enuronosyl groups at their non-reducing ends.. It functions in the pathway glycan metabolism; pectin degradation; 2-dehydro-3-deoxy-D-gluconate from pectin: step 2/5. Involved in the degradation of pectin. May assist in the removal and modification of an existing pectin matrix in order to allow the deposition of newly synthesized walls polymers for a specialized function or to create an architecture that is extensible. The protein is Pectate lyase of Zinnia elegans (Garden zinnia).